A 306-amino-acid chain; its full sequence is tRNA-cytidine(32) 2-sulfurtransferase (306 aa).

The disordered stretch occupies residues 1 to 25; that stretch reads MSAVISLPDPQPRAARDPRVAEREQ. Positions 14–25 are enriched in basic and acidic residues; sequence AARDPRVAEREQ. The short motif at 57–62 is the PP-loop motif element; the sequence is SGGKDS. [4Fe-4S] cluster-binding residues include C132, C135, and C223. The interval 286 to 306 is disordered; that stretch reads AHAWLAGSPADADADPETPTV. Residues 297–306 show a composition bias toward acidic residues; sequence ADADPETPTV.

It belongs to the TtcA family. Homodimer. Requires Mg(2+) as cofactor. [4Fe-4S] cluster serves as cofactor.

The protein localises to the cytoplasm. It carries out the reaction cytidine(32) in tRNA + S-sulfanyl-L-cysteinyl-[cysteine desulfurase] + AH2 + ATP = 2-thiocytidine(32) in tRNA + L-cysteinyl-[cysteine desulfurase] + A + AMP + diphosphate + H(+). It participates in tRNA modification. In terms of biological role, catalyzes the ATP-dependent 2-thiolation of cytidine in position 32 of tRNA, to form 2-thiocytidine (s(2)C32). The sulfur atoms are provided by the cysteine/cysteine desulfurase (IscS) system. This is tRNA-cytidine(32) 2-sulfurtransferase from Stenotrophomonas maltophilia (strain K279a).